A 159-amino-acid chain; its full sequence is Cyclic pyranopterin monophosphate synthase (159 aa).

Substrate is bound by residues 76 to 78 (LCH) and 114 to 115 (ME). Residue D129 is part of the active site.

This sequence belongs to the MoaC family. Homohexamer; trimer of dimers.

It carries out the reaction (8S)-3',8-cyclo-7,8-dihydroguanosine 5'-triphosphate = cyclic pyranopterin phosphate + diphosphate. It participates in cofactor biosynthesis; molybdopterin biosynthesis. In terms of biological role, catalyzes the conversion of (8S)-3',8-cyclo-7,8-dihydroguanosine 5'-triphosphate to cyclic pyranopterin monophosphate (cPMP). This is Cyclic pyranopterin monophosphate synthase from Psychromonas ingrahamii (strain DSM 17664 / CCUG 51855 / 37).